The primary structure comprises 165 residues: Nucleotide-binding protein Cagg_1607 (165 aa).

The protein belongs to the YajQ family.

Nucleotide-binding protein. The polypeptide is Nucleotide-binding protein Cagg_1607 (Chloroflexus aggregans (strain MD-66 / DSM 9485)).